The following is a 190-amino-acid chain: Hypoxanthine/guanine phosphoribosyltransferase (190 aa).

The protein belongs to the purine/pyrimidine phosphoribosyltransferase family. Archaeal HPRT subfamily. Homodimer.

The protein localises to the cytoplasm. The catalysed reaction is IMP + diphosphate = hypoxanthine + 5-phospho-alpha-D-ribose 1-diphosphate. It carries out the reaction GMP + diphosphate = guanine + 5-phospho-alpha-D-ribose 1-diphosphate. It functions in the pathway purine metabolism; IMP biosynthesis via salvage pathway; IMP from hypoxanthine: step 1/1. Catalyzes a salvage reaction resulting in the formation of IMP that is energically less costly than de novo synthesis. The chain is Hypoxanthine/guanine phosphoribosyltransferase from Methanothrix thermoacetophila (strain DSM 6194 / JCM 14653 / NBRC 101360 / PT) (Methanosaeta thermophila).